A 132-amino-acid polypeptide reads, in one-letter code: Small ribosomal subunit protein uS8 (132 aa).

Belongs to the universal ribosomal protein uS8 family. As to quaternary structure, part of the 30S ribosomal subunit. Contacts proteins S5 and S12.

In terms of biological role, one of the primary rRNA binding proteins, it binds directly to 16S rRNA central domain where it helps coordinate assembly of the platform of the 30S subunit. In Staphylococcus saprophyticus subsp. saprophyticus (strain ATCC 15305 / DSM 20229 / NCIMB 8711 / NCTC 7292 / S-41), this protein is Small ribosomal subunit protein uS8.